Reading from the N-terminus, the 893-residue chain is Desmocollin-1 (893 aa).

The N-terminal stretch at 1–29 (MAVASAAPGSIFWKQLLFSLLVLILFCDA) is a signal peptide. A propeptide spanning residues 30-132 (CQKISLQVPS…KDAVLRRTKR (103 aa)) is cleaved from the precursor. 5 Cadherin domains span residues 133-240 (RWAP…APYF), 241-352 (ENKL…APYF), 353-470 (TETS…GPEC), 471-574 (QPPV…DHPP), and 575-682 (QIKQ…LSRE). Residues 133–692 (RWAPIPCSLM…AALANVFLGK (560 aa)) lie on the Extracellular side of the membrane. The N-linked (GlcNAc...) asparagine glycan is linked to Asn-163. Thr-383 is modified (phosphothreonine). Residues Asn-398 and Asn-545 are each glycosylated (N-linked (GlcNAc...) asparagine). The helical transmembrane segment at 693–715 (WAILAMVLGSVLLLCILFTCFCV) threads the bilayer. The Cytoplasmic segment spans residues 716–893 (TVKKTVKKCF…RTLAKTCVKK (178 aa)).

Binds to JUP/plakoglobin. Post-translationally, isoform 1A is phosphorylated on a serine but isoform 1B is not. In terms of tissue distribution, epidermis and weakly in tongue papillae.

The protein resides in the cell membrane. It localises to the cell junction. It is found in the desmosome. A component of desmosome cell-cell junctions which are required for positive regulation of cellular adhesion. Required for desmosome adhesion strength between the granular layers of the epidermis, as a result moderates epidermal proliferation and differentiation. Is therefore required to maintain postnatal epidermal barrier function and normal hair follicle morphology into adulthood. This is Desmocollin-1 (DSC1) from Bos taurus (Bovine).